Here is a 457-residue protein sequence, read N- to C-terminus: Bifunctional protein GlmU (457 aa).

Residues 1–229 (MYNCAIILAA…YEEIMGVNSR (229 aa)) are pyrophosphorylase. Residues 8 to 11 (LAAG), Lys-22, Gln-73, and 78 to 79 (GT) each bind UDP-N-acetyl-alpha-D-glucosamine. Asp-103 serves as a coordination point for Mg(2+). UDP-N-acetyl-alpha-D-glucosamine contacts are provided by Gly-140, Glu-155, Asn-170, and Asn-227. Asn-227 contacts Mg(2+). The linker stretch occupies residues 230 to 250 (VQLSEAEIVMRKRINHKHMVN). The N-acetyltransferase stretch occupies residues 251–457 (GVTFIDCEST…WLDKKGLLKK (207 aa)). Arg-332 and Lys-350 together coordinate UDP-N-acetyl-alpha-D-glucosamine. Catalysis depends on His-362, which acts as the Proton acceptor. Tyr-365 and Asn-376 together coordinate UDP-N-acetyl-alpha-D-glucosamine. Residues 385–386 (NY), Ala-422, and Arg-439 contribute to the acetyl-CoA site.

It in the N-terminal section; belongs to the N-acetylglucosamine-1-phosphate uridyltransferase family. This sequence in the C-terminal section; belongs to the transferase hexapeptide repeat family. In terms of assembly, homotrimer. The cofactor is Mg(2+).

It is found in the cytoplasm. The catalysed reaction is alpha-D-glucosamine 1-phosphate + acetyl-CoA = N-acetyl-alpha-D-glucosamine 1-phosphate + CoA + H(+). It carries out the reaction N-acetyl-alpha-D-glucosamine 1-phosphate + UTP + H(+) = UDP-N-acetyl-alpha-D-glucosamine + diphosphate. The protein operates within nucleotide-sugar biosynthesis; UDP-N-acetyl-alpha-D-glucosamine biosynthesis; N-acetyl-alpha-D-glucosamine 1-phosphate from alpha-D-glucosamine 6-phosphate (route II): step 2/2. It functions in the pathway nucleotide-sugar biosynthesis; UDP-N-acetyl-alpha-D-glucosamine biosynthesis; UDP-N-acetyl-alpha-D-glucosamine from N-acetyl-alpha-D-glucosamine 1-phosphate: step 1/1. It participates in bacterial outer membrane biogenesis; LPS lipid A biosynthesis. Catalyzes the last two sequential reactions in the de novo biosynthetic pathway for UDP-N-acetylglucosamine (UDP-GlcNAc). The C-terminal domain catalyzes the transfer of acetyl group from acetyl coenzyme A to glucosamine-1-phosphate (GlcN-1-P) to produce N-acetylglucosamine-1-phosphate (GlcNAc-1-P), which is converted into UDP-GlcNAc by the transfer of uridine 5-monophosphate (from uridine 5-triphosphate), a reaction catalyzed by the N-terminal domain. The protein is Bifunctional protein GlmU of Clostridium botulinum (strain Langeland / NCTC 10281 / Type F).